The sequence spans 345 residues: Dimethyladenosine transferase 1, mitochondrial (345 aa).

The N-terminal 27 residues, 1-27 (MAASGKLGTFRLPPLPTIREIIKLFGL), are a transit peptide targeting the mitochondrion. Residues 35 to 38 (QNFL), N36, L38, G63, E85, D111, and N141 contribute to the S-adenosyl-L-methionine site.

Belongs to the class I-like SAM-binding methyltransferase superfamily. rRNA adenine N(6)-methyltransferase family. KsgA subfamily. In terms of assembly, interacts with mitochondrial RNA polymerase POLRMT. Interacts with TFAM.

The protein resides in the mitochondrion. S-adenosyl-L-methionine-dependent methyltransferase which specifically dimethylates mitochondrial 12S rRNA at the conserved stem loop. Also required for basal transcription of mitochondrial DNA, probably via its interaction with POLRMT and TFAM. Stimulates transcription independently of the methyltransferase activity. The sequence is that of Dimethyladenosine transferase 1, mitochondrial (Tfb1m) from Rattus norvegicus (Rat).